The following is a 456-amino-acid chain: Solute carrier family 49 member 4 homolog (456 aa).

Residues 1 to 29 (MGLEWSSPGERQPLLYPGGPRAPRVFGRR) are Cytoplasmic-facing. A Di-leucine motif; mediates lysosomal localization motif is present at residues 14-15 (LL). The chain crosses the membrane as a helical span at residues 30–50 (WLVLLLFSLLAFLQGLVWNSW). Residues 51 to 67 (GPIQNSARTAYNFSGLD) lie on the Lumenal side of the membrane. Residue asparagine 62 is glycosylated (N-linked (GlcNAc...) asparagine). The chain crosses the membrane as a helical span at residues 68 to 88 (IALLVLWGPIGFLPCFLFMWL). Topologically, residues 89–95 (MDNRGLR) are cytoplasmic. A helical transmembrane segment spans residues 96–116 (VTVLLTALLMVLGAGLRCVPV). Residues 117 to 131 (QDLAVRRKLIHGGQL) are Lumenal-facing. A helical transmembrane segment spans residues 132-152 (LNGFAGPTVMNAAPFLSTTWF). Over 153 to 162 (SPDERATATA) the chain is Cytoplasmic. Residues 163–183 (IASMLSYLGGACAFLVGPLVV) form a helical membrane-spanning segment. Topologically, residues 184–207 (PAPNSTSGLLLYSGSVGAIRDRIE) are lumenal. N-linked (GlcNAc...) asparagine glycosylation is present at asparagine 187. Residues 208 to 228 (AVMYAEFGIIFVVFAAILAYF) form a helical membrane-spanning segment. Over 229-259 (PSRPPVPPSVAAASRRLSYRTSILRLLSNVR) the chain is Cytoplasmic. The chain crosses the membrane as a helical span at residues 260 to 280 (FLLIVLAYAIPLGFYAGWSGV). At 281–292 (LDLILTPVHVTQ) the chain is on the lumenal side. Residues 293–313 (VDAGWVGFWSIVGGCVVGIAV) form a helical membrane-spanning segment. Residues 314-326 (GRFADSIRGVLKP) lie on the Cytoplasmic side of the membrane. A helical membrane pass occupies residues 327-347 (ILLLLFSGAALSSTWFTLTFL). At 348-362 (SNVTHLPLTTATLYT) the chain is on the lumenal side. N-linked (GlcNAc...) asparagine glycosylation is present at asparagine 349. Residues 363-383 (SCILIGVFLSGTVPIFFEMFV) form a helical membrane-spanning segment. The Cytoplasmic segment spans residues 384–392 (ETVYPIPEG). Residues 393–413 (ITCGVVTFLSNLFMGVLLLFL) traverse the membrane as a helical segment. Topologically, residues 414–420 (TLYQTNL) are lumenal. Asparagine 419 carries N-linked (GlcNAc...) asparagine glycosylation. Residues 421–441 (SWLNWCLTGSCFLSLLFIACF) traverse the membrane as a helical segment. Residues 442-456 (RESYDRLYLDVFVSV) are Cytoplasmic-facing.

The protein belongs to the major facilitator superfamily.

The protein localises to the lysosome membrane. The enzyme catalyses pyridoxine(out) + n H(+)(out) = pyridoxine(in) + n H(+)(in). Mediates H(+)-dependent pyridoxine transport. This chain is Solute carrier family 49 member 4 homolog (slc49a4), found in Xenopus tropicalis (Western clawed frog).